A 390-amino-acid chain; its full sequence is Nuclear receptor subfamily 2 group F member 6 (390 aa).

The span at 1-15 shows a compositional bias: gly residues; that stretch reads MAMVTGGWGGPGGDT. Residues 1–50 form a disordered region; that stretch reads MAMVTGGWGGPGGDTNGVDKAGGSYPRATEDDSASPPGATSDAEPGDEER. Phosphoserine occurs at positions 35 and 41. The segment at residues 54–129 is a DNA-binding region (nuclear receptor); it reads QVDCVVCGDK…VGMRKEAVQP (76 aa). 2 consecutive NR C4-type zinc fingers follow at residues 57–77 and 93–117; these read CVVC…CEGC and CRSN…LKKC. The NR LBD domain maps to 157 to 380; sequence PVSELIAQLL…TLIRDMLLSG (224 aa). Residues 314-390 are important for dimerization; the sequence is LQEKAQVALT…STFNWPYGSG (77 aa).

It belongs to the nuclear hormone receptor family. NR2 subfamily. Binds DNA as dimer; homodimer and heterodimer with NR2F2 and probably NR2F1. Interacts with THRB.

It is found in the nucleus. Its function is as follows. Transcription factor predominantly involved in transcriptional repression. Binds to promoter/enhancer response elements that contain the imperfect 5'-AGGTCA-3' direct or inverted repeats with various spacings which are also recognized by other nuclear hormone receptors. Involved in modulation of hormonal responses. Represses transcriptional activity of the lutropin-choriogonadotropic hormone receptor/LHCGR gene, the renin/REN gene and the oxytocin-neurophysin/OXT gene. Represses the triiodothyronine-dependent and -independent transcriptional activity of the thyroid hormone receptor gene in a cell type-specific manner. The corepressing function towards thyroid hormone receptor beta/THRB involves at least in part the inhibition of THRB binding to triiodothyronine response elements (TREs) by NR2F6. Inhibits NFATC transcription factor DNA binding and subsequently its transcriptional activity. Acts as transcriptional repressor of IL-17 expression in Th-17 differentiated CD4(+) T cells and may be involved in induction and/or maintenance of peripheral immunological tolerance and autoimmunity. Involved in development of forebrain circadian clock; is required early in the development of the locus coeruleus (LC). The protein is Nuclear receptor subfamily 2 group F member 6 (Nr2f6) of Rattus norvegicus (Rat).